The primary structure comprises 173 residues: Crossover junction endodeoxyribonuclease RuvC (173 aa).

Catalysis depends on residues D8, E68, and D140. Mg(2+)-binding residues include D8, E68, and D140.

Belongs to the RuvC family. In terms of assembly, homodimer which binds Holliday junction (HJ) DNA. The HJ becomes 2-fold symmetrical on binding to RuvC with unstacked arms; it has a different conformation from HJ DNA in complex with RuvA. In the full resolvosome a probable DNA-RuvA(4)-RuvB(12)-RuvC(2) complex forms which resolves the HJ. Mg(2+) is required as a cofactor.

It is found in the cytoplasm. It catalyses the reaction Endonucleolytic cleavage at a junction such as a reciprocal single-stranded crossover between two homologous DNA duplexes (Holliday junction).. In terms of biological role, the RuvA-RuvB-RuvC complex processes Holliday junction (HJ) DNA during genetic recombination and DNA repair. Endonuclease that resolves HJ intermediates. Cleaves cruciform DNA by making single-stranded nicks across the HJ at symmetrical positions within the homologous arms, yielding a 5'-phosphate and a 3'-hydroxyl group; requires a central core of homology in the junction. The consensus cleavage sequence is 5'-(A/T)TT(C/G)-3'. Cleavage occurs on the 3'-side of the TT dinucleotide at the point of strand exchange. HJ branch migration catalyzed by RuvA-RuvB allows RuvC to scan DNA until it finds its consensus sequence, where it cleaves and resolves the cruciform DNA. This chain is Crossover junction endodeoxyribonuclease RuvC, found in Saccharophagus degradans (strain 2-40 / ATCC 43961 / DSM 17024).